Consider the following 259-residue polypeptide: Chloroplastic import inner membrane translocase subunit HP30-2 (259 aa).

Transmembrane regions (helical) follow at residues 55–75 (AVVT…MGTL), 108–124 (NFAA…CVMK), 135–155 (AVVA…GLQG), and 158–178 (MNAI…FKLG).

Belongs to the Tim17/Tim22/Tim23 family. In terms of assembly, probable component of a protein-conducting channel made of HP30-1, HP30-2 and HP20 that mediates the import of transit sequence-less proteins into the chloroplastic inner membrane. Interacts with CEQORH.

It localises to the mitochondrion membrane. It is found in the plastid. The protein resides in the chloroplast inner membrane. Functionally, together with HP30-1 and HP20, triggers the import and insertion of transit sequence-less multi-pass transmembrane proteins (e.g. CEQORH) into the chloroplastic inner membrane. The polypeptide is Chloroplastic import inner membrane translocase subunit HP30-2 (Arabidopsis thaliana (Mouse-ear cress)).